The primary structure comprises 446 residues: Methylenetetrahydrofolate--tRNA-(uracil-5-)-methyltransferase TrmFO (446 aa).

11–16 (GGGLAG) contacts FAD.

This sequence belongs to the MnmG family. TrmFO subfamily. Requires FAD as cofactor.

The protein resides in the cytoplasm. It carries out the reaction uridine(54) in tRNA + (6R)-5,10-methylene-5,6,7,8-tetrahydrofolate + NADH + H(+) = 5-methyluridine(54) in tRNA + (6S)-5,6,7,8-tetrahydrofolate + NAD(+). It catalyses the reaction uridine(54) in tRNA + (6R)-5,10-methylene-5,6,7,8-tetrahydrofolate + NADPH + H(+) = 5-methyluridine(54) in tRNA + (6S)-5,6,7,8-tetrahydrofolate + NADP(+). In terms of biological role, catalyzes the folate-dependent formation of 5-methyl-uridine at position 54 (M-5-U54) in all tRNAs. This chain is Methylenetetrahydrofolate--tRNA-(uracil-5-)-methyltransferase TrmFO, found in Oleidesulfovibrio alaskensis (strain ATCC BAA-1058 / DSM 17464 / G20) (Desulfovibrio alaskensis).